The following is a 510-amino-acid chain: Monocarboxylate transporter 14 (510 aa).

The Cytoplasmic portion of the chain corresponds to 1–27; that stretch reads MYTSHEDIGYDFEDGPKDKKTLKPHPN. 6 helical membrane passes run 28–48, 74–94, 103–123, 127–147, 159–179, and 191–209; these read IDGG…ILIM, WVSS…GLFI, AIIG…AANV, FITF…PAVV, LAQG…TVLL, and AMLI…GALM. Residues 214-255 form a disordered region; it reads PGKNPNDPGEKDVRGLPAHSTESVKSTGQQGRTEEKDGGLGN. Residues 233 to 244 show a composition bias toward polar residues; that stretch reads STESVKSTGQQG. 6 consecutive transmembrane segments (helical) span residues 315-335, 353-373, 379-399, 408-428, 443-463, and 474-494; these read MFVA…IPFI, FPLT…LGVI, ISVW…IFIL, LAVI…MPVV, GIII…AGWI, and FYIC…QPCI. Residues 495–510 lie on the Cytoplasmic side of the membrane; sequence RIIEQSRRKYMDGAHV.

The protein belongs to the major facilitator superfamily. Monocarboxylate porter (TC 2.A.1.13) family.

The protein resides in the cell membrane. Proton-linked monocarboxylate transporter. May catalyze the transport of monocarboxylates across the plasma membrane. The protein is Monocarboxylate transporter 14 (SLC16A14) of Homo sapiens (Human).